Here is a 326-residue protein sequence, read N- to C-terminus: Microtubule-associated protein RP/EB family member 2 (326 aa).

S9 is modified (phosphoserine). A Calponin-homology (CH) domain is found at 56 to 158 (TMSRHDIIAW…FIQWFKKFYD (103 aa)). The residue at position 166 (Y166) is a Phosphotyrosine. 2 disordered regions span residues 170–239 (EARQ…DKDL) and 297–326 (YASD…QEEY). The interval 186–326 (QIFNLPKKSH…DQQPQQQEEY (141 aa)) is DCTN1-binding. Over residues 199–233 (SPTAGAAKSSPASKPGSTPSRPSSAKRASSSGSAS) the composition is skewed to low complexity. Phosphoserine is present on residues S218 and S235. Positions 235-305 (SDKDLETQVI…LYASDEQEGQ (71 aa)) constitute an EB1 C-terminal domain. The APC-binding stretch occupies residues 258–301 (EGVEKERDFYFGKLREIELLCQEHGQENDDLVQRLMEVLYASDE). Positions 300–312 (DEQEGQTEEPEAE) are enriched in acidic residues. Residues 317-326 (DQQPQQQEEY) are compositionally biased toward low complexity.

This sequence belongs to the MAPRE family. In terms of assembly, interacts with DCTN1. Interacts with APC (via C-terminal). Interacts with monomeric and polymerized tubulin. Interacts with SLAIN1. Interacts (via the N-terminal region) with BAG1. Interacts with ASB14. Post-translationally, ubiquitinated in an ASB14-dependent manner; leading to proteasomal degradation. Phosphorylated at Ser-235 by CK2 leading to enhanced cell adhesion. Phosphorylated by CDK1 and AURKB during mitosis reduces the binding affinity of MAPRE2 for microtubules. Expressed during early stages of apico-basal epithelial differentiation but down-regulated in most cells at later stages.

It localises to the cytoplasm. The protein localises to the cytoskeleton. Its subcellular location is the spindle. In terms of biological role, adapter protein that is involved in microtubule polymerization, and spindle function by stabilizing microtubules and anchoring them at centrosomes. Therefore, ensures mitotic progression and genome stability. Acts as a central regulator of microtubule reorganization in apico-basal epithelial differentiation. Plays a role during oocyte meiosis by regulating microtubule dynamics. Participates in neurite growth by interacting with plexin B3/PLXNB3 and microtubule reorganization during apico-basal epithelial differentiation. Plays also an essential role for cell migration and focal adhesion dynamics. Mechanistically, recruits HAX1 to microtubules in order to regulate focal adhesion dynamics. This is Microtubule-associated protein RP/EB family member 2 (Mapre2) from Mus musculus (Mouse).